We begin with the raw amino-acid sequence, 376 residues long: ATP phosphoribosyltransferase regulatory subunit (376 aa).

The protein belongs to the class-II aminoacyl-tRNA synthetase family. HisZ subfamily. Heteromultimer composed of HisG and HisZ subunits.

It is found in the cytoplasm. It functions in the pathway amino-acid biosynthesis; L-histidine biosynthesis; L-histidine from 5-phospho-alpha-D-ribose 1-diphosphate: step 1/9. Its function is as follows. Required for the first step of histidine biosynthesis. May allow the feedback regulation of ATP phosphoribosyltransferase activity by histidine. The chain is ATP phosphoribosyltransferase regulatory subunit from Brucella anthropi (strain ATCC 49188 / DSM 6882 / CCUG 24695 / JCM 21032 / LMG 3331 / NBRC 15819 / NCTC 12168 / Alc 37) (Ochrobactrum anthropi).